Consider the following 256-residue polypeptide: MRSGALWPLLWGALVWTVGSVGAVMGSEDSVPGGVCWLQQGREATCSLVLKTRVSREECCASGNINTAWSNFTHPGNKISLLGFLGLVHCLPCKDSCDGVECGPGKACRMLGGRPHCECVPNCEGLPAGFQVCGSDGATYRDECELRTARCRGHPDLRVMYRGRCQKSCAQVVCPRPQSCLVDQTGSAHCVVCRAAPCPVPSNPGQELCGNNNVTYISSCHLRQATCFLGRSIGVRHPGICTGGPKVPAEEEENFV.

The N-terminal stretch at 1 to 23 is a signal peptide; it reads MRSGALWPLLWGALVWTVGSVGA. The 72-residue stretch at 34–105 folds into the TB domain; that stretch reads GVCWLQQGRE…SCDGVECGPG (72 aa). 8 cysteine pairs are disulfide-bonded: cysteine 36–cysteine 59, cysteine 46–cysteine 90, cysteine 60–cysteine 93, cysteine 97–cysteine 108, cysteine 102–cysteine 117, cysteine 119–cysteine 151, cysteine 123–cysteine 144, and cysteine 133–cysteine 165. N-linked (GlcNAc...) asparagine glycosylation occurs at asparagine 71. Residues 97–117 enclose the Follistatin-like 1 domain; the sequence is CDGVECGPGKACRMLGGRPHC. 2 consecutive Kazal-like domains span residues 111–167 and 187–243; these read LGGR…RCQK and SAHC…ICTG. Positions 168 to 191 constitute a Follistatin-like 2 domain; sequence SCAQVVCPRPQSCLVDQTGSAHCV. 3 cysteine pairs are disulfide-bonded: cysteine 193-cysteine 227, cysteine 198-cysteine 220, and cysteine 209-cysteine 241. N-linked (GlcNAc...) asparagine glycosylation is present at asparagine 213.

Interacts with INHBA and INHBB. Interacts with FN1. Interacts with ADAM12. Interacts with MLLT10; the interaction enhances MLLT10 in vitro transcriptional activity and self-association. Interacts with MSTN. In terms of tissue distribution, abundantly expressed in heart, lung, kidney and testis. Continuously expressed in embryonic heart.

The protein resides in the secreted. It localises to the nucleus. Its function is as follows. The secreted form is a binding and antagonizing protein for members of the TGF-beta family, such as activin, BMP2 and MSTN. Inhibits activin A-, activin B-, BMP2- and MSDT-induced cellular signaling; more effective on activin A than on activin B. Involved in bone formation; inhibits osteoclast differentiation. Involved in hematopoiesis; involved in differentiation of hemopoietic progenitor cells, increases hematopoietic cell adhesion to fibronectin and seems to contribute to the adhesion of hematopoietic precursor cells to the bone marrow stroma. The nuclear form is probably involved in transcriptional regulation via interaction with MLLT10. This Mus musculus (Mouse) protein is Follistatin-related protein 3 (Fstl3).